The following is a 340-amino-acid chain: NAC domain-containing protein 89 (340 aa).

In terms of domain architecture, NAC spans 21-164 (VFPGFKFSPT…AMVVCRVRRN (144 aa)). A DNA-binding region spans residues 119 to 170 (IGTKRTLVFHIGRAPKGERTDWIMHEYCVKGVSLDDAMVVCRVRRNKEYNSG). A compositionally biased stretch (polar residues) spans 167 to 181 (YNSGTSQKAPKPNSS). Residues 167 to 198 (YNSGTSQKAPKPNSSAEKHAKVQNGATSSGSP) form a disordered region.

Interacts with PAS1.

The protein localises to the cytoplasm. The protein resides in the nucleus. Functionally, transcription factor involved in plant cell division. This Arabidopsis thaliana (Mouse-ear cress) protein is NAC domain-containing protein 89 (NAC089).